A 392-amino-acid chain; its full sequence is MNICDLAPAYIRAISPYQPGKPISELAREMGMDEQSIIKLASNENPLGTSPMALNAMSKALDEVSLYPDGSGFELKAALSERYGVTSDQIVLGNGSNDVLELAARVFLKPGASTVYSQHAFAVYPLVTKAVGGIGISVPARNYGHDLDAMLDAVAPETRVVFIANPNNPTGTLLPADDVLRFLERVSPDVLVVLDEAYNEYLPPALKGDSIAWLKQFPNLLITRTFSKAYGMAGVRVGFGLGHPDVAGLMNRVRQPFNVNNIGLAGAVAALQDEEFVKRSYALNQAGMLQIVTGLRQMGIEYIPSYGNFLSFRVPGNVKAINESLLKQGVIVRPISIYEMPEHLRVTVGLESENEKFLKSLAIALETTEGAAADTIPEMAVSFPKVASGGTA.

An N6-(pyridoxal phosphate)lysine modification is found at lysine 228.

Belongs to the class-II pyridoxal-phosphate-dependent aminotransferase family. Histidinol-phosphate aminotransferase subfamily. As to quaternary structure, homodimer. Pyridoxal 5'-phosphate serves as cofactor.

It catalyses the reaction L-histidinol phosphate + 2-oxoglutarate = 3-(imidazol-4-yl)-2-oxopropyl phosphate + L-glutamate. The protein operates within amino-acid biosynthesis; L-histidine biosynthesis; L-histidine from 5-phospho-alpha-D-ribose 1-diphosphate: step 7/9. The protein is Histidinol-phosphate aminotransferase 2 of Nitrosospira multiformis (strain ATCC 25196 / NCIMB 11849 / C 71).